We begin with the raw amino-acid sequence, 235 residues long: Probable inactive serine protease 37 (235 aa).

Residues 1–19 (MKYVFYLGVLAGTFFFADS) form the signal peptide. The Peptidase S1 domain occupies 20 to 233 (SVQKEDPAPY…YVSWIENTAK (214 aa)). Intrachain disulfides connect Cys40-Cys56, Cys131-Cys198, and Cys163-Cys177.

It belongs to the peptidase S1 family. In terms of tissue distribution, testis-specific. Expressed in spermatids (at protein level).

The protein localises to the cytoplasmic vesicle. Its subcellular location is the secretory vesicle. It localises to the acrosome. It is found in the secreted. Its function is as follows. Plays a role in male fertility. May have a role in sperm migration or binding to zona-intact eggs. Involved in the activation of the proacrosin/acrosin system. In Homo sapiens (Human), this protein is Probable inactive serine protease 37.